Here is a 258-residue protein sequence, read N- to C-terminus: Flagellin B3 (258 aa).

Positions 1-8 (MRFLKKRG) are excised as a propeptide.

Belongs to the archaeal flagellin family.

Its subcellular location is the archaeal flagellum. Flagellin is the subunit protein which polymerizes to form the filaments of archaeal flagella. This Thermococcus kodakarensis (strain ATCC BAA-918 / JCM 12380 / KOD1) (Pyrococcus kodakaraensis (strain KOD1)) protein is Flagellin B3 (flaB3).